The chain runs to 208 residues: Transcription factor atf-4 homolog (208 aa).

2 disordered regions span residues 18–47 (HNQT…YFNP) and 106–165 (ERRS…EKEE). Residues 110–120 (NSSASPASNWS) show a composition bias toward low complexity. Residues 121–141 (SDEHDSQSEKSYHPYKTPEKK) are compositionally biased toward basic and acidic residues. A bZIP domain is found at 138 to 201 (PEKKERKKAQ…RYFKKFMTEM (64 aa)). The tract at residues 140–163 (KKERKKAQNRLAATRYREKKRREK) is basic motif. Residues 173–187 (LSVTNGKLKDQVSEL) are leucine-zipper.

It belongs to the bZIP family.

It is found in the nucleus. In terms of biological role, transcription factor. Involved in positively modulating longevity and stress tolerance, probably acting by positively regulating expression of transsulfuration enzyme cth-2, leading to increased hydrogen sulfide production and therefore increased protein persulfidation, a protective modification of redox-reactive cysteines. May mediate longevity and increased stress resistance induced by mTORC1 suppression. The polypeptide is Transcription factor atf-4 homolog (Caenorhabditis elegans).